Reading from the N-terminus, the 182-residue chain is NADH-quinone oxidoreductase subunit I (182 aa).

4Fe-4S ferredoxin-type domains are found at residues 52–82 (LTRD…LQKA) and 92–121 (DFFR…LTPD). Residues Cys-62, Cys-65, Cys-68, Cys-72, Cys-101, Cys-104, Cys-107, and Cys-111 each contribute to the [4Fe-4S] cluster site.

The protein belongs to the complex I 23 kDa subunit family. In terms of assembly, NDH-1 is composed of 13 different subunits. Subunits NuoA, H, J, K, L, M, N constitute the membrane sector of the complex. Requires [4Fe-4S] cluster as cofactor.

The protein localises to the cell inner membrane. The catalysed reaction is a quinone + NADH + 5 H(+)(in) = a quinol + NAD(+) + 4 H(+)(out). In terms of biological role, NDH-1 shuttles electrons from NADH, via FMN and iron-sulfur (Fe-S) centers, to quinones in the respiratory chain. The immediate electron acceptor for the enzyme in this species is believed to be ubiquinone. Couples the redox reaction to proton translocation (for every two electrons transferred, four hydrogen ions are translocated across the cytoplasmic membrane), and thus conserves the redox energy in a proton gradient. The chain is NADH-quinone oxidoreductase subunit I from Pseudomonas fluorescens (strain Pf0-1).